A 160-amino-acid chain; its full sequence is MVPSAGQFALFALGILLAVCQALENSTSALSADPPIAAAVVSHFNDCPDSHSQFCFHGTCRFLVQEDKPACVCHSGYVGARCEHADLLAVVAASQKKQAITALVVVSIVALAVLIITCVLIHCCQVRKHCEWCRALICRHEKPSALLKGRTACCHSETVV.

Residues 1–23 form the signal peptide; that stretch reads MVPSAGQFALFALGILLAVCQAL. Residues 24-39 constitute a propeptide, removed in mature form; it reads ENSTSALSADPPIAAA. Over 24-98 the chain is Extracellular; the sequence is ENSTSALSAD…AVVAASQKKQ (75 aa). A glycan (N-linked (GlcNAc...) asparagine) is linked at asparagine 25. The EGF-like domain maps to 43–83; it reads HFNDCPDSHSQFCFHGTCRFLVQEDKPACVCHSGYVGARCE. Intrachain disulfides connect cysteine 47–cysteine 60, cysteine 55–cysteine 71, and cysteine 73–cysteine 82. Residues 90–160 constitute a propeptide, removed in mature form; it reads VVAASQKKQA…TACCHSETVV (71 aa). A helical membrane pass occupies residues 99–124; the sequence is AITALVVVSIVALAVLIITCVLIHCC. The Cytoplasmic segment spans residues 125-160; it reads QVRKHCEWCRALICRHEKPSALLKGRTACCHSETVV. S-palmitoyl cysteine attachment occurs at residues cysteine 153 and cysteine 154.

As to quaternary structure, interacts with the PDZ domains of MAGI3, SDCBP and SNTA1. The interaction with SDCBP, is required for the targeting to the cell surface. In the endoplasmic reticulum, in its immature form (i.e. with a prosegment and lacking full N-glycosylation), interacts with CNIH. In the Golgi apparatus, may form a complex with CNIH and GORASP2. Interacts (via cytoplasmic C-terminal domain) with NKD2.

Its subcellular location is the secreted. It is found in the extracellular space. The protein resides in the cell membrane. Functionally, TGF alpha is a mitogenic polypeptide that is able to bind to the EGF receptor/EGFR and to act synergistically with TGF beta to promote anchorage-independent cell proliferation in soft agar. In Sus scrofa (Pig), this protein is Protransforming growth factor alpha (TGFA).